The sequence spans 209 residues: MATKKRSASSSRWLQEHFSDKYVQQAQKKGLRSRAWFKLDEIQQSDKLFRPGMTVVDLGAAPGGWSQYVATQIGGKGRIIACDILPMDPMVGVDFLQGDFREPLVLQALLERVGEQKVQVVVSDMAPNMSGTPAVDIPKSMYLVELALDMCRDVLAPGGNFLVKVFQGEGFDEYLREIRSLFTKVKIRKPDASRARSREVYIVATGRKL.

Residues G63, W65, D83, D99, and D124 each contribute to the S-adenosyl-L-methionine site. K164 functions as the Proton acceptor in the catalytic mechanism.

This sequence belongs to the class I-like SAM-binding methyltransferase superfamily. RNA methyltransferase RlmE family.

It localises to the cytoplasm. The catalysed reaction is uridine(2552) in 23S rRNA + S-adenosyl-L-methionine = 2'-O-methyluridine(2552) in 23S rRNA + S-adenosyl-L-homocysteine + H(+). In terms of biological role, specifically methylates the uridine in position 2552 of 23S rRNA at the 2'-O position of the ribose in the fully assembled 50S ribosomal subunit. The protein is Ribosomal RNA large subunit methyltransferase E of Sodalis glossinidius (strain morsitans).